The primary structure comprises 195 residues: Protease (195 aa).

A Peptidase A2 domain is found at 71 to 149 (ALMLVDTGAE…DKWQILGRDV (79 aa)). Residue aspartate 76 is part of the active site.

In Bos taurus (Bovine), this protein is Protease.